A 437-amino-acid chain; its full sequence is GTPase Der (437 aa).

EngA-type G domains lie at 2 to 167 and 180 to 356; these read ATVL…EKKG and IRVA…NSLF. Residues 8–15, 55–59, 118–121, 186–193, 233–237, and 299–302 each bind GTP; these read GKSNVGKS, DTCGI, NKSE, GRPNAGKS, DTAGL, and NKID. In terms of domain architecture, KH-like spans 357–437; it reads YRVQTSAVNA…PIFLKFKNRH (81 aa).

Belongs to the TRAFAC class TrmE-Era-EngA-EngB-Septin-like GTPase superfamily. EngA (Der) GTPase family. Associates with the 50S ribosomal subunit.

Functionally, GTPase that plays an essential role in the late steps of ribosome biogenesis. This Thermosipho melanesiensis (strain DSM 12029 / CIP 104789 / BI429) protein is GTPase Der.